Reading from the N-terminus, the 518-residue chain is Protein translocase subunit SecD (518 aa).

6 consecutive transmembrane segments (helical) span residues 9-29, 361-381, 384-404, 406-426, 452-474, and 486-506; these read IFLS…NFMQ, LIGF…LGLF, IALS…QATL, LPGI…NVLI, FATI…IFGV, and IGII…IDIW.

This sequence belongs to the SecD/SecF family. SecD subfamily. Forms a complex with SecF. Part of the essential Sec protein translocation apparatus which comprises SecA, SecYEG and auxiliary proteins SecDF-YajC and YidC.

It is found in the cell inner membrane. Functionally, part of the Sec protein translocase complex. Interacts with the SecYEG preprotein conducting channel. SecDF uses the proton motive force (PMF) to complete protein translocation after the ATP-dependent function of SecA. This Rickettsia felis (strain ATCC VR-1525 / URRWXCal2) (Rickettsia azadi) protein is Protein translocase subunit SecD.